We begin with the raw amino-acid sequence, 191 residues long: Small ribosomal subunit protein uS7 (191 aa).

The tract at residues 56–80 (NKSGEQGDGDGEGGGKAGGIKKRSL) is disordered.

The protein belongs to the universal ribosomal protein uS7 family. Part of the 30S ribosomal subunit. Contacts proteins S9 and S11.

One of the primary rRNA binding proteins, it binds directly to 16S rRNA where it nucleates assembly of the head domain of the 30S subunit. Is located at the subunit interface close to the decoding center, probably blocks exit of the E-site tRNA. The protein is Small ribosomal subunit protein uS7 of Coxiella burnetii (strain CbuG_Q212) (Coxiella burnetii (strain Q212)).